The primary structure comprises 201 residues: Inosine triphosphate pyrophosphatase (201 aa).

Residue 16–21 (TGNAKK) coordinates ITP. A Mg(2+)-binding site is contributed by Glu44. ITP is bound by residues Lys56, 72 to 73 (DT), Lys89, 148 to 151 (FGWD), Lys171, and 176 to 177 (HR).

It belongs to the HAM1 NTPase family. As to quaternary structure, homodimer. Mg(2+) serves as cofactor. The cofactor is Mn(2+).

The protein resides in the cytoplasm. It catalyses the reaction ITP + H2O = IMP + diphosphate + H(+). It carries out the reaction dITP + H2O = dIMP + diphosphate + H(+). The catalysed reaction is XTP + H2O = XMP + diphosphate + H(+). Pyrophosphatase that hydrolyzes non-canonical purine nucleotides such as inosine triphosphate (ITP), deoxyinosine triphosphate (dITP) or xanthosine 5'-triphosphate (XTP) to their respective monophosphate derivatives. The enzyme does not distinguish between the deoxy- and ribose forms. Probably excludes non-canonical purines from RNA and DNA precursor pools, thus preventing their incorporation into RNA and DNA and avoiding chromosomal lesions. The sequence is that of Inosine triphosphate pyrophosphatase from Zea mays (Maize).